The sequence spans 443 residues: Protein Z-dependent protease inhibitor (443 aa).

An N-terminal signal peptide occupies residues 1–23 (MKVVPSLLLSVLLAQVWLVPGLA). Residues 24 to 66 (PSPQSPETPAPQNQTSRVVQAPREEEEDEQEASEEKAGDEEKA) are disordered. N-linked (GlcNAc...) asparagine glycosylation occurs at Asn36. Position 56 is a phosphoserine (Ser56). Residues 56–66 (SEEKAGDEEKA) show a composition bias toward basic and acidic residues. The interval 136 to 153 (TKPGLLPSLFKGLRETLS) is heparin-binding. N-linked (GlcNAc...) asparagine glycans are attached at residues Asn180 and Asn295.

Belongs to the serpin family. Phosphorylated by FAM20C in the extracellular medium.

Its subcellular location is the secreted. Inhibits activity of the coagulation protease factor Xa in the presence of PROZ, calcium and phospholipids. Also inhibits factor XIa in the absence of cofactors. In Pongo abelii (Sumatran orangutan), this protein is Protein Z-dependent protease inhibitor (SERPINA10).